Reading from the N-terminus, the 615-residue chain is Coagulation factor XII (615 aa).

The first 19 residues, 1–19 (MRALLLLGFLLVSLESTLS), serve as a signal peptide directing secretion. Residues 42–90 (VTGEPCHFPFQYHRQLYHKCTHKGRPGPQPWCATTPNFDQDQRWGYCLE) form the Fibronectin type-II domain. 13 cysteine pairs are disulfide-bonded: Cys-47–Cys-73, Cys-61–Cys-88, Cys-98–Cys-110, Cys-104–Cys-119, Cys-121–Cys-130, Cys-135–Cys-163, Cys-161–Cys-170, Cys-178–Cys-189, Cys-183–Cys-198, Cys-200–Cys-209, Cys-217–Cys-295, Cys-238–Cys-277, and Cys-266–Cys-290. The EGF-like 1 domain maps to 94–131 (VKDHCSKHSPCQKGGTCVNMPSGPHCLCPQHLTGNHCQ). Residue Thr-109 is glycosylated (O-linked (Fuc) threonine). The Fibronectin type-I domain maps to 133–173 (EKCFEPQLLRFFHKNEIWYRTEQAAVARCQCKGPDAHCQRL). One can recognise an EGF-like 2 domain in the interval 174 to 210 (ASQACRTNPCLHGGRCLEVEGHRLCHCPVGYTGAFCD). The region spanning 217-295 (CYDGRGLSYR…SWEYCDLAQC (79 aa)) is the Kringle domain. Asn-249 is a glycosylation site (N-linked (GlcNAc...) asparagine). The interval 298–359 (PTQAAPPTPV…SLTRNGPLSC (62 aa)) is disordered. Residues Thr-299 and Thr-305 are each glycosylated (O-linked (GalNAc...) threonine). An O-linked (GalNAc...) serine glycan is attached at Ser-308. Over residues 317-326 (PAQPAPPKPQ) the composition is skewed to pro residues. A compositionally biased stretch (low complexity) spans 327–338 (PTTRTPPQSQTP). O-linked (GalNAc...) threonine glycosylation is found at Thr-328, Thr-329, and Thr-337. Intrachain disulfides connect Cys-359–Cys-486, Cys-397–Cys-413, Cys-405–Cys-475, Cys-436–Cys-439, Cys-500–Cys-569, Cys-532–Cys-548, and Cys-559–Cys-590. The region spanning 373–614 (VVGGLVALRG…YLAWIREHTV (242 aa)) is the Peptidase S1 domain. His-412 functions as the Charge relay system in the catalytic mechanism. Asn-433 carries N-linked (GlcNAc...) asparagine glycosylation. Residue Asp-461 is the Charge relay system of the active site. Residue Ser-563 is the Charge relay system of the active site.

This sequence belongs to the peptidase S1 family. As to quaternary structure, interacts with HRG; the interaction, which is enhanced in the presence of zinc ions and inhibited by heparin-binding, inhibits factor XII autoactivation and contact-initiated coagulation. Interacts (inactive and activated) with D7L2, an anticoagulant protein from Anopheles gambiae. Interacts (activated) with iripin-8, a serine protease inhibitor from Ixodes ricinus saliva. Interacts (inactive and activated) (via amino acids 1-77) with triafestin-1 and triafestin-2, anticoagulant proteins from Triatoma infestans. Interacts (inactive and activated) (via amino acids 1-77) with short form salivary protein D7R1, an anticoagulant protein from Anopheles stephensi. Interacts (inactive and activated) (via fibronectin type II domain) with haemaphysalin, an anticoagulant protein from Haemaphysalis longicornis. Factor XII is activated by kallikrein in alpha-factor XIIa, which is further converted by trypsin into beta-factor XIIa. Alpha-factor XIIa is composed of an NH2-terminal heavy chain, called coagulation factor XIIa heavy chain, and a COOH-terminal light chain, called coagulation factor XIIa light chain, connected by a disulfide bond. Beta-factor XIIa is composed of 2 chains linked by a disulfide bond, an N-terminal nonapeptide, called beta-factor XIIa part 1, and coagulation factor XIIa light chain, also known in this context as beta-factor XIIa part 2. In terms of processing, O- and N-glycosylated. The O-linked polysaccharides were not identified, but are probably the mucin type linked to GalNAc.

It is found in the secreted. The enzyme catalyses Selective cleavage of Arg-|-Ile bonds in factor VII to form factor VIIa and factor XI to form factor XIa.. Activity is promoted in the presence of negatively charged surfaces. In terms of biological role, factor XII is a serum glycoprotein that participates in the initiation of blood coagulation, fibrinolysis, and the generation of bradykinin and angiotensin. Prekallikrein is cleaved by factor XII to form kallikrein, which then cleaves factor XII first to alpha-factor XIIa and then trypsin cleaves it to beta-factor XIIa. Alpha-factor XIIa activates factor XI to factor XIa. The polypeptide is Coagulation factor XII (F12) (Homo sapiens (Human)).